A 133-amino-acid chain; its full sequence is Large ribosomal subunit protein uL11 (133 aa).

It belongs to the universal ribosomal protein uL11 family. As to quaternary structure, part of the ribosomal stalk of the 50S ribosomal subunit. Interacts with L10 and the large rRNA to form the base of the stalk. L10 forms an elongated spine to which 2 L12 dimers bind in a sequential fashion forming a pentameric L10(L12)2(L12)2 complex. In terms of processing, one or more lysine residues are methylated.

In terms of biological role, forms part of the ribosomal stalk which helps the ribosome interact with GTP-bound translation factors. The polypeptide is Large ribosomal subunit protein uL11 (Geobacillus stearothermophilus (Bacillus stearothermophilus)).